The following is a 472-amino-acid chain: Cysteine--tRNA ligase (472 aa).

C28 contributes to the Zn(2+) binding site. A 'HIGH' region motif is present at residues 30 to 40; it reads PTVYDYTHIGH. The Zn(2+) site is built by C207, H232, and E236. The 'KMSKS' region signature appears at 264-268; that stretch reads KMSKS. K267 contacts ATP.

This sequence belongs to the class-I aminoacyl-tRNA synthetase family. The cofactor is Zn(2+).

The protein localises to the cytoplasm. The enzyme catalyses tRNA(Cys) + L-cysteine + ATP = L-cysteinyl-tRNA(Cys) + AMP + diphosphate. The sequence is that of Cysteine--tRNA ligase (cysS) from Aeropyrum pernix (strain ATCC 700893 / DSM 11879 / JCM 9820 / NBRC 100138 / K1).